The sequence spans 1680 residues: Alpha-protein kinase 3 (1680 aa).

The disordered stretch occupies residues 1 to 37 (MGSRRAAGRGWGLGGRAGAGGDSEDDGPVWTPGPASR). The span at 9-21 (RGWGLGGRAGAGG) shows a compositional bias: gly residues. Residues 77–173 (PLFETTLKSR…SGVLEVGTMT (97 aa)) form the Ig-like 1 domain. Serine 229 bears the Phosphoserine mark. 5 disordered regions span residues 237-288 (STPV…NGED), 302-759 (ELGP…CPRE), 785-950 (SEEA…GTRS), 1078-1128 (EGSA…LTGL), and 1147-1244 (PKVR…QRKA). The segment covering 320-337 (KDEESKPGEQKLELEKAE) has biased composition (basic and acidic residues). Residues 339 to 353 (SQCSSENVVPSTDKP) are compositionally biased toward polar residues. Pro residues predominate over residues 402–426 (APAPAPVPAPALAPAPVPVPAPTPV). Low complexity predominate over residues 514–532 (ESTTTSLSSQTSESMAQSL). Composition is skewed to polar residues over residues 557-566 (SPLQGQTSHK) and 731-744 (ETQSEQLSMASLSS). The segment covering 785 to 796 (SEEAAFRSHEDG) has biased composition (basic and acidic residues). A compositionally biased stretch (polar residues) spans 917 to 932 (SPTQSHPPEAMATSSE). Composition is skewed to basic and acidic residues over residues 1087-1111 (ERTSQESDKKGLLGEVEGHTVESRT) and 1151-1165 (AGSDGEANKAEERES). Phosphoserine is present on serine 1199. Residues 1231–1244 (DEGKQEALAKQRKA) are compositionally biased toward basic and acidic residues. The 89-residue stretch at 1251-1339 (PQVIRKIRVE…GSASTDFCLS (89 aa)) folds into the Ig-like 2 domain. Cysteine 1273 and cysteine 1323 are disulfide-bonded. An Alpha-type protein kinase domain is found at 1367–1600 (KGLADSGCWG…YCDMLGLKPL (234 aa)). A disordered region spans residues 1603-1680 (PEAAHPQAKA…DGSSKAQSMR (78 aa)). Composition is skewed to polar residues over residues 1639-1660 (PQGSRKSAPSSRATLQASQAAT) and 1671-1680 (DGSSKAQSMR).

Belongs to the protein kinase superfamily. Alpha-type protein kinase family. ALPK subfamily. Expressed in the heart and skeletal muscle of adult mice.

It is found in the nucleus. It catalyses the reaction L-seryl-[protein] + ATP = O-phospho-L-seryl-[protein] + ADP + H(+). The enzyme catalyses L-threonyl-[protein] + ATP = O-phospho-L-threonyl-[protein] + ADP + H(+). Functionally, involved in cardiomyocyte differentiation. The chain is Alpha-protein kinase 3 from Mus musculus (Mouse).